The chain runs to 354 residues: Uroporphyrinogen decarboxylase (354 aa).

Substrate-binding positions include 27–31 (RQAGR), aspartate 77, tyrosine 154, serine 209, and histidine 327.

The protein belongs to the uroporphyrinogen decarboxylase family. Homodimer.

It localises to the cytoplasm. The enzyme catalyses uroporphyrinogen III + 4 H(+) = coproporphyrinogen III + 4 CO2. Its pathway is porphyrin-containing compound metabolism; protoporphyrin-IX biosynthesis; coproporphyrinogen-III from 5-aminolevulinate: step 4/4. Functionally, catalyzes the decarboxylation of four acetate groups of uroporphyrinogen-III to yield coproporphyrinogen-III. This is Uroporphyrinogen decarboxylase from Shewanella amazonensis (strain ATCC BAA-1098 / SB2B).